A 1103-amino-acid polypeptide reads, in one-letter code: Long tail fiber protein Gp37 (1103 aa).

Residues 988-991 are interaction with the receptor-recognizing protein gp38; the sequence is DVYV. The Peptidase S74 domain occupies 993-1091; that stretch reads SDIRVKKDLV…AEIAELKSEI (99 aa).

The protein belongs to the S16-like long tail fiber protein Gp37 family. In terms of assembly, homotrimer. Interacts with the receptor-recognizing protein Gp38. Post-translationally, proteolytic cleavage and release of the chaperone in the host cytosol stabilizes the folded protein.

It localises to the virion. In terms of biological role, constitues the trimeric tip of the long tail fiber that mediates the attachment to the host receptor, together with the receptor-recognizing protein Gp38. The C-terminal chaperone protein mediates homotrimerization and proper folding of the catalytic trimer. The polypeptide is Long tail fiber protein Gp37 (37) (Escherichia coli O157:H7 (Bacteriophage AR1)).